Consider the following 420-residue polypeptide: Pyrin and HIN domain-containing protein 1 (420 aa).

In terms of domain architecture, Pyrin spans 1–87 (MVNEYKRIVL…ANKLKNEKAK (87 aa)). Disordered regions lie at residues 82-201 (KNEK…SSSA) and 216-236 (RLKNVPKEPSEENGHQQGSKK). Residues 87 to 102 (KAKRTRTGKRKTAAKR) show a composition bias toward basic residues. 2 stretches are compositionally biased toward polar residues: residues 108–118 (PSTSQPMSTTN) and 126–151 (GRSTPDTQVAQLSLPTASRRNQAIQI). Residues 152–169 (SPTIASSSGQTSSRSSET) show a composition bias toward low complexity. The segment covering 170–201 (LQSIIQSPKTPKRPSSSILDPPVSSGTASSSA) has biased composition (polar residues). Residues 219–416 (NVPKEPSEEN…STTHSNMQVI (198 aa)) form the HIN-200 domain. Basic and acidic residues predominate over residues 220–229 (VPKEPSEENG).

This sequence belongs to the HIN-200 family.

It is found in the nucleus. The sequence is that of Pyrin and HIN domain-containing protein 1 from Mus musculus (Mouse).